The following is a 282-amino-acid chain: Ribonuclease 3 (282 aa).

The region spanning 18-141 (FVAFFKSLNI…LVAAIYEDLG (124 aa)) is the RNase III domain. E59 provides a ligand contact to Mg(2+). D63 is a catalytic residue. Mg(2+) contacts are provided by D127 and E130. Residue E130 is part of the active site.

This sequence belongs to the ribonuclease III family. Homodimer. Mg(2+) serves as cofactor.

It localises to the cytoplasm. It catalyses the reaction Endonucleolytic cleavage to 5'-phosphomonoester.. Its function is as follows. Digests double-stranded RNA. Involved in the processing of primary rRNA transcript to yield the immediate precursors to the large and small rRNAs (23S and 16S). Processes some mRNAs, and tRNAs when they are encoded in the rRNA operon. Processes pre-crRNA and tracrRNA of type II CRISPR loci if present in the organism. The polypeptide is Ribonuclease 3 (Mycoplasmoides pneumoniae (strain ATCC 15531 / DSM 23978 / CIP 103766 / NBRC 14401 / NCTC 10119 / FH) (Mycoplasma pneumoniae)).